A 189-amino-acid chain; its full sequence is Peptidyl-tRNA hydrolase (189 aa).

Residue Tyr16 participates in tRNA binding. The active-site Proton acceptor is the His21. TRNA contacts are provided by Phe67, Asn69, and Asn115.

It belongs to the PTH family. Monomer.

It is found in the cytoplasm. It catalyses the reaction an N-acyl-L-alpha-aminoacyl-tRNA + H2O = an N-acyl-L-amino acid + a tRNA + H(+). Hydrolyzes ribosome-free peptidyl-tRNAs (with 1 or more amino acids incorporated), which drop off the ribosome during protein synthesis, or as a result of ribosome stalling. In terms of biological role, catalyzes the release of premature peptidyl moieties from peptidyl-tRNA molecules trapped in stalled 50S ribosomal subunits, and thus maintains levels of free tRNAs and 50S ribosomes. In Legionella pneumophila (strain Corby), this protein is Peptidyl-tRNA hydrolase.